The chain runs to 157 residues: 2-C-methyl-D-erythritol 2,4-cyclodiphosphate synthase (157 aa).

Positions 8 and 10 each coordinate a divalent metal cation. 4-CDP-2-C-methyl-D-erythritol 2-phosphate contacts are provided by residues 8–10 and 34–35; these read DVH and HS. An a divalent metal cation-binding site is contributed by H42. Residues 56-58, 61-65, 132-135, F139, and R142 contribute to the 4-CDP-2-C-methyl-D-erythritol 2-phosphate site; these read DIG, FPDTD, and TTTE.

This sequence belongs to the IspF family. In terms of assembly, homotrimer. A divalent metal cation is required as a cofactor.

The catalysed reaction is 4-CDP-2-C-methyl-D-erythritol 2-phosphate = 2-C-methyl-D-erythritol 2,4-cyclic diphosphate + CMP. It participates in isoprenoid biosynthesis; isopentenyl diphosphate biosynthesis via DXP pathway; isopentenyl diphosphate from 1-deoxy-D-xylulose 5-phosphate: step 4/6. Its function is as follows. Involved in the biosynthesis of isopentenyl diphosphate (IPP) and dimethylallyl diphosphate (DMAPP), two major building blocks of isoprenoid compounds. Catalyzes the conversion of 4-diphosphocytidyl-2-C-methyl-D-erythritol 2-phosphate (CDP-ME2P) to 2-C-methyl-D-erythritol 2,4-cyclodiphosphate (ME-CPP) with a corresponding release of cytidine 5-monophosphate (CMP). This Pseudomonas putida (strain W619) protein is 2-C-methyl-D-erythritol 2,4-cyclodiphosphate synthase.